The chain runs to 306 residues: Glutaminase (306 aa).

Residues Ser64, Asn115, Glu159, Asn166, Tyr190, Tyr242, and Val260 each coordinate substrate.

Belongs to the glutaminase family. As to quaternary structure, homotetramer.

The catalysed reaction is L-glutamine + H2O = L-glutamate + NH4(+). This is Glutaminase from Vibrio parahaemolyticus serotype O3:K6 (strain RIMD 2210633).